Consider the following 237-residue polypeptide: MSNFSRAVDQKTLLVAGCDTGVGKTVTTSALAAYWWKCGKDQSFGLMKLMQTGLGDDELYQQLFGHLTRWDVVTPLKFATPLAPPLAADQEGKTIDLGVVWQTLQTMQQNHDHVLVEALGSLGSPVTHELTVADIAALWRLETILVVPVQLGAMGQAIAQVALARQTKVKLKGLVLSCASPEAEGKVEDWATPAMLESFTHLPVLGIVPYLTESERENLSRLAEITARFGLEKLAYF.

ATP is bound at residue Gly21 to Val26. Thr25 contacts Mg(2+). Lys48 is an active-site residue. Position 52 (Thr52) interacts with substrate. ATP-binding positions include Asp56, Glu117–Gly120, Ser177–Cys178, and Pro209–Leu211. Residues Asp56 and Glu117 each contribute to the Mg(2+) site.

It belongs to the dethiobiotin synthetase family. As to quaternary structure, homodimer. Mg(2+) serves as cofactor.

It localises to the cytoplasm. It catalyses the reaction (7R,8S)-7,8-diammoniononanoate + CO2 + ATP = (4R,5S)-dethiobiotin + ADP + phosphate + 3 H(+). The enzyme catalyses (7R,8S)-8-amino-7-(carboxyamino)nonanoate + ATP = (4R,5S)-dethiobiotin + ADP + phosphate + H(+). It functions in the pathway cofactor biosynthesis; biotin biosynthesis; biotin from 7,8-diaminononanoate: step 1/2. In terms of biological role, catalyzes a mechanistically unusual reaction, the ATP-dependent insertion of CO2 between the N7 and N8 nitrogen atoms of 7,8-diaminopelargonic acid (DAPA, also called 7,8-diammoniononanoate) to form a ureido ring. This cyanobacterium does not encode bioA (which catalyzes the formation of the precursor for this reaction in the cannonical pathway), instead it encodes bioU, which replaces bioA and also performs the first half of the cannonical BioD reaction. Thus in this bacteria BioD has a different substrate. In Synechocystis replacement of bioU by bioA from E.coli leads to biotin synthesis, showing BioD can use the 'cannonical' 7,8-diammoniononanoate as a substrate. This Synechocystis sp. (strain ATCC 27184 / PCC 6803 / Kazusa) protein is ATP-dependent dethiobiotin synthetase BioD.